The primary structure comprises 341 residues: Methionine import ATP-binding protein MetN 1 (341 aa).

An ABC transporter domain is found at 2–241; it reads IEFRQVSKSF…PKTTIAQNFV (240 aa). ATP is bound at residue 38–45; the sequence is GYSGAGKS.

This sequence belongs to the ABC transporter superfamily. Methionine importer (TC 3.A.1.24) family. In terms of assembly, the complex is composed of two ATP-binding proteins (MetN), two transmembrane proteins (MetI) and a solute-binding protein (MetQ).

It is found in the cell membrane. It carries out the reaction L-methionine(out) + ATP + H2O = L-methionine(in) + ADP + phosphate + H(+). It catalyses the reaction D-methionine(out) + ATP + H2O = D-methionine(in) + ADP + phosphate + H(+). Its function is as follows. Part of the ABC transporter complex MetNIQ involved in methionine import. Responsible for energy coupling to the transport system. The protein is Methionine import ATP-binding protein MetN 1 of Staphylococcus aureus (strain Mu50 / ATCC 700699).